Consider the following 543-residue polypeptide: Methionine--tRNA ligase (543 aa).

A 'HIGH' region motif is present at residues 13 to 23; it reads PYANGPLHVGH. Positions 145, 148, 158, and 161 each coordinate Zn(2+). A 'KMSKS' region motif is present at residues 334–338; sequence QFSKS. ATP is bound at residue lysine 337.

The protein belongs to the class-I aminoacyl-tRNA synthetase family. MetG type 1 subfamily. Zn(2+) is required as a cofactor.

The protein localises to the cytoplasm. The enzyme catalyses tRNA(Met) + L-methionine + ATP = L-methionyl-tRNA(Met) + AMP + diphosphate. In terms of biological role, is required not only for elongation of protein synthesis but also for the initiation of all mRNA translation through initiator tRNA(fMet) aminoacylation. This chain is Methionine--tRNA ligase, found in Thermoplasma volcanium (strain ATCC 51530 / DSM 4299 / JCM 9571 / NBRC 15438 / GSS1).